Consider the following 374-residue polypeptide: NAD-capped RNA hydrolase ndx-9 (374 aa).

Zn(2+) contacts are provided by Cys-181, Cys-184, Cys-199, and Cys-202. Substrate is bound by residues Tyr-207, 243–245 (AGF), Glu-259, Glu-263, and Glu-307. In terms of domain architecture, Nudix hydrolase spans 208–336 (PTFSPVSITL…LADPLLKNLP (129 aa)). Residues Ala-243, Glu-259, Glu-263, and Glu-307 each contribute to the Mg(2+) site. A Nudix box motif is present at residues 244–265 (GFAHSGESMAECARREIAEEVG). Positions 367 to 369 (LEN) match the Microbody targeting signal motif.

This sequence belongs to the Nudix hydrolase family. NudC subfamily. In terms of assembly, homodimer. Requires Mg(2+) as cofactor. The cofactor is Mn(2+). Zn(2+) serves as cofactor.

It catalyses the reaction a 5'-end NAD(+)-phospho-ribonucleoside in mRNA + H2O = a 5'-end phospho-adenosine-phospho-ribonucleoside in mRNA + beta-nicotinamide D-ribonucleotide + 2 H(+). It carries out the reaction NAD(+) + H2O = beta-nicotinamide D-ribonucleotide + AMP + 2 H(+). The catalysed reaction is NADH + H2O = reduced beta-nicotinamide D-ribonucleotide + AMP + 2 H(+). In terms of biological role, mRNA decapping enzyme that specifically removes the nicotinamide adenine dinucleotide (NAD) cap from a subset of mRNAs by hydrolyzing the diphosphate linkage to produce nicotinamide mononucleotide (NMN) and 5' monophosphate mRNA. The NAD-cap is present at the 5'-end of some RNAs; in contrast to the canonical N7 methylguanosine (m7G) cap, the NAD cap promotes mRNA decay. Mediates the hydrolysis of some nucleoside diphosphate derivatives. The sequence is that of NAD-capped RNA hydrolase ndx-9 (ndx-9) from Caenorhabditis elegans.